The primary structure comprises 912 residues: Nitrate reductase [NADH] (912 aa).

Residues 1 to 99 are disordered; that stretch reads SVEPRQPFGR…PRDEGTADAW (99 aa). The span at 13-23 shows a compositional bias: low complexity; sequence APATAPTARAP. Over residues 54–68 the composition is skewed to acidic residues; sequence AEEDEEDDDEDDEGH. Residues 85-94 are compositionally biased toward basic and acidic residues; that stretch reads PSTRDPRDEG. Residue C186 participates in Mo-molybdopterin binding. The 76-residue stretch at 535-610 folds into the Cytochrome b5 heme-binding domain; it reads DKQFTMSEVR…LDTYRIGELI (76 aa). 2 residues coordinate heme: H570 and H593. Residues 651 to 764 form the FAD-binding FR-type domain; that stretch reads REKVPCRLVD…KGPLGHVEYT (114 aa). FAD contacts are provided by residues 703–706, 720–724, F725, F732, 737–739, S788, and T791; these read RAYT, LVKVY, and LMT.

This sequence belongs to the nitrate reductase family. In terms of assembly, homodimer. FAD serves as cofactor. The cofactor is heme. Mo-molybdopterin is required as a cofactor.

The enzyme catalyses nitrite + NAD(+) + H2O = nitrate + NADH + H(+). Its function is as follows. Nitrate reductase is a key enzyme involved in the first step of nitrate assimilation in plants, fungi and bacteria. The chain is Nitrate reductase [NADH] from Hordeum vulgare (Barley).